The primary structure comprises 571 residues: MRPAPPPPLLLLLLLLPPPSLSHDGTIIAATSPTSGQPSTELPGGKGLITTAKTIQNTDLAITGEKVMSATVSKGPLPGSSNSVSMTLAPTQKNTVIAPDQDEKVSTNPTIATSDSKGIPDLNKSILPSATNSMKPDTPVTQTAGPGAQGNPGTTVSHMTSENTEQTTSQPPPQVKPSSITPALTSIITPTSPRQPSANSTTLKPPESSSESPDKSHTASSSLGTKVVPSSSLYGTSPTRTSSVTFWGGPQSSSGTPPVPAPTPRPAATSSSTPGISSVPGTTSLPSETESLESPSSESPSQPPKLRPTGPPSSGSSGPAASLPDEGPRSSSTQRAATAPRAPSVPSPTSAQGDDRIKCESPGRLTDKMLLLNLTRSGLCAGNNSDDKLITLLCRAAKATFNPAQDQCHIRLVPIQDTQAVAIKEITVQTNLLPRDVYELLKDKWDELKEVGVSNMKLGDQGPPEETEDRFSMPLIITIVCMASFLLLVAALYGCCHQRLSQRKDQQRLTEELQTVENGYHDNPTLEVMETSSEMQEKKVVNLNGELGDSWIVPLDNLAKDDLDEEEDTHL.

Residues 1–22 (MRPAPPPPLLLLLLLLPPPSLS) form the signal peptide. Residues 23-474 (HDGTIIAATS…EETEDRFSMP (452 aa)) are Extracellular-facing. The disordered stretch occupies residues 94–361 (NTVIAPDQDE…QGDDRIKCES (268 aa)). Polar residues predominate over residues 106-116 (STNPTIATSDS). Asparagine 123 carries an N-linked (GlcNAc...) asparagine glycan. Composition is skewed to polar residues over residues 126-144 (ILPS…TQTA), 151-169 (NPGT…QTTS), 176-203 (KPSS…STTL), and 218-245 (TASS…SSVT). Asparagine 199 carries N-linked (GlcNAc...) asparagine glycosylation. Residues 282–300 (TTSLPSETESLESPSSESP) show a composition bias toward low complexity. Pro residues predominate over residues 301–311 (SQPPKLRPTGP). Low complexity predominate over residues 312-322 (PSSGSSGPAAS). Residues asparagine 373 and asparagine 383 are each glycosylated (N-linked (GlcNAc...) asparagine). The chain crosses the membrane as a helical span at residues 475–495 (LIITIVCMASFLLLVAALYGC). The Cytoplasmic segment spans residues 496 to 571 (CHQRLSQRKD…DLDEEEDTHL (76 aa)). Position 531 is a phosphothreonine (threonine 531). Serine 550 is modified (phosphoserine). Position 569 is a phosphothreonine (threonine 569).

Belongs to the podocalyxin family. In terms of assembly, found in a complex with EZR, PODXL and NHERF2. Associates with the actin cytoskeleton through complex formation with EZR and NHERF2. Interacts (via the C-terminal PDZ-binding motif DTHL) with NHERF1 (via the PDZ domains); interaction is not detected in glomerular epithelium cells. Interacts (via the C-terminal PDZ-binding motif DTHL) with NHERF2 (via the PDZ 1 domain); interaction is detected in glomerular epithelium cells. Interacts with EZR. Monomer; when associated with the membrane raft. Oligomer; when integrated in the apical membrane. Interacts with NHERF2. Interacts (via the C-terminal PDZ-binding motif DTHL) with NHERF1 (via the PDZ domains); the interaction take place early in the secretory pathway and is necessary for its apical membrane sorting. Post-translationally, N- and O-linked glycosylated. Sialoglycoprotein. In terms of tissue distribution, expressed in glomerular and tubular epithelial cells and peritubular capillaries of the kidney (at protein level). Expressed in heart, lung, renal cortex and medulla, kidney and muscle.

It is found in the apical cell membrane. The protein resides in the membrane raft. It localises to the cell projection. The protein localises to the lamellipodium. Its subcellular location is the filopodium. It is found in the ruffle. The protein resides in the microvillus. It localises to the membrane. Involved in the regulation of both adhesion and cell morphology and cancer progression. Functions as an anti-adhesive molecule that maintains an open filtration pathway between neighboring foot processes in the podocyte by charge repulsion. Acts as a pro-adhesive molecule, enhancing the adherence of cells to immobilized ligands, increasing the rate of migration and cell-cell contacts in an integrin-dependent manner. Induces the formation of apical actin-dependent microvilli. Involved in the formation of a preapical plasma membrane subdomain to set up initial epithelial polarization and the apical lumen formation during renal tubulogenesis. Plays a role in cancer development and aggressiveness by inducing cell migration and invasion through its interaction with the actin-binding protein EZR. Affects EZR-dependent signaling events, leading to increased activities of the MAPK and PI3K pathways in cancer cells. This chain is Podocalyxin (PODXL), found in Canis lupus familiaris (Dog).